The following is a 128-amino-acid chain: Sirohydrochlorin cobaltochelatase (128 aa).

The Proton acceptor role is filled by His-9. Residue His-9 participates in Co(2+) binding. Substrate is bound by residues Lys-43 and 68–73 (FATGTH). His-73 is a Co(2+) binding site.

Belongs to the CbiX family. CbiXS subfamily. As to quaternary structure, homotetramer; dimer of dimers.

The enzyme catalyses Co-sirohydrochlorin + 2 H(+) = sirohydrochlorin + Co(2+). It functions in the pathway cofactor biosynthesis; adenosylcobalamin biosynthesis; cob(II)yrinate a,c-diamide from sirohydrochlorin (anaerobic route): step 1/10. Catalyzes the insertion of Co(2+) into sirohydrochlorin as part of the anaerobic pathway to cobalamin biosynthesis. This Saccharolobus islandicus (strain Y.G.57.14 / Yellowstone #1) (Sulfolobus islandicus) protein is Sirohydrochlorin cobaltochelatase.